The following is a 167-amino-acid chain: Lipoprotein signal peptidase (167 aa).

4 helical membrane-spanning segments follow: residues 8 to 28 (TFLT…VVLL), 46 to 66 (WGHF…FGLF), 70 to 90 (KIPL…FLGI), and 101 to 121 (IALT…LFHG). Catalysis depends on residues D125 and D143. The chain crosses the membrane as a helical span at residues 139–159 (FNLADAFISLGTLLLVGHLYF).

It belongs to the peptidase A8 family.

It is found in the cell inner membrane. It carries out the reaction Release of signal peptides from bacterial membrane prolipoproteins. Hydrolyzes -Xaa-Yaa-Zaa-|-(S,diacylglyceryl)Cys-, in which Xaa is hydrophobic (preferably Leu), and Yaa (Ala or Ser) and Zaa (Gly or Ala) have small, neutral side chains.. It participates in protein modification; lipoprotein biosynthesis (signal peptide cleavage). Functionally, this protein specifically catalyzes the removal of signal peptides from prolipoproteins. In Chlamydia muridarum (strain MoPn / Nigg), this protein is Lipoprotein signal peptidase.